The following is a 448-amino-acid chain: Exodeoxyribonuclease 7 large subunit (448 aa).

Belongs to the XseA family. In terms of assembly, heterooligomer composed of large and small subunits.

The protein localises to the cytoplasm. It catalyses the reaction Exonucleolytic cleavage in either 5'- to 3'- or 3'- to 5'-direction to yield nucleoside 5'-phosphates.. Its function is as follows. Bidirectionally degrades single-stranded DNA into large acid-insoluble oligonucleotides, which are then degraded further into small acid-soluble oligonucleotides. The chain is Exodeoxyribonuclease 7 large subunit from Shewanella baltica (strain OS195).